We begin with the raw amino-acid sequence, 301 residues long: Probable alpha-L-glutamate ligase (301 aa).

The ATP-grasp domain maps to 104–287 (LQLLSRRGIG…VAGMIIEYLE (184 aa)). ATP contacts are provided by residues K141, 178-179 (EY), D187, and 211-213 (RSN). D248, E260, and N262 together coordinate Mg(2+). D248, E260, and N262 together coordinate Mn(2+).

It belongs to the RimK family. The cofactor is Mg(2+). Requires Mn(2+) as cofactor.

The polypeptide is Probable alpha-L-glutamate ligase (Pseudomonas savastanoi pv. phaseolicola (strain 1448A / Race 6) (Pseudomonas syringae pv. phaseolicola (strain 1448A / Race 6))).